A 155-amino-acid polypeptide reads, in one-letter code: MSRRGTAEEKTAKSDPIYRNRLVNMLVNRILKHGKKSLAYQIIYRAVKKIQQKTEANPLSVLRQAIRGVTPDIAVKARRVGGSTHQVPIEIGSTQGKALAIRWLLGASRKRPGRNMAFKLSSELVDAAKGSGDAIRKKEETHRMAEANRAFAHFR.

The protein belongs to the universal ribosomal protein uS7 family. As to quaternary structure, part of the 30S ribosomal subunit.

Its subcellular location is the plastid. It localises to the chloroplast. In terms of biological role, one of the primary rRNA binding proteins, it binds directly to 16S rRNA where it nucleates assembly of the head domain of the 30S subunit. This Schisandra chinensis (Chinese magnolia vine) protein is Small ribosomal subunit protein uS7c (rps7).